Reading from the N-terminus, the 418-residue chain is Tyrosine--tRNA ligase (418 aa).

Y34 provides a ligand contact to L-tyrosine. A 'HIGH' region motif is present at residues 39 to 48; it reads PTADSLHLGH. L-tyrosine is bound by residues Y169 and Q173. A 'KMSKS' region motif is present at residues 229-233; sequence KFGKS. K232 contacts ATP. The 67-residue stretch at 352 to 418 folds into the S4 RNA-binding domain; it reads LNLVDMLVTA…GKKKYAVLTY (67 aa).

It belongs to the class-I aminoacyl-tRNA synthetase family. TyrS type 1 subfamily. Homodimer.

It localises to the cytoplasm. The enzyme catalyses tRNA(Tyr) + L-tyrosine + ATP = L-tyrosyl-tRNA(Tyr) + AMP + diphosphate + H(+). Functionally, catalyzes the attachment of tyrosine to tRNA(Tyr) in a two-step reaction: tyrosine is first activated by ATP to form Tyr-AMP and then transferred to the acceptor end of tRNA(Tyr). The protein is Tyrosine--tRNA ligase of Streptococcus pyogenes serotype M12 (strain MGAS2096).